The chain runs to 164 residues: UPF0114 protein Avin_40830 (164 aa).

4 helical membrane-spanning segments follow: residues 15-35 (LLAP…LKFF), 53-73 (LILV…LVMV), 103-125 (GSLK…LRVF), and 136-156 (LLWY…MSYL).

Belongs to the UPF0114 family.

It is found in the cell membrane. The chain is UPF0114 protein Avin_40830 from Azotobacter vinelandii (strain DJ / ATCC BAA-1303).